The primary structure comprises 187 residues: MATSNDIKNGTILKLDGNLWQTIEFQHVKPGKGGAFVRTKLRNVTSGKVVDKTFNAGAKIETATVDRSEYQYLYQDGDDYVFMDNSTYDQITVPGVVVGDAANFMLENQNVTVAIHEGAPLYIEMPPSVVLEITYTEPGLQGDRSTGGTKPATVETGYQIQVPLFLEQGTKVKVDTRTGDYLGRVNE.

The protein belongs to the elongation factor P family.

It localises to the cytoplasm. The protein operates within protein biosynthesis; polypeptide chain elongation. In terms of biological role, involved in peptide bond synthesis. Stimulates efficient translation and peptide-bond synthesis on native or reconstituted 70S ribosomes in vitro. Probably functions indirectly by altering the affinity of the ribosome for aminoacyl-tRNA, thus increasing their reactivity as acceptors for peptidyl transferase. This is Elongation factor P from Kocuria rhizophila (strain ATCC 9341 / DSM 348 / NBRC 103217 / DC2201).